A 38-amino-acid chain; its full sequence is Toxin BmK NSPK (38 aa).

Disulfide bonds link Cys7–Cys27, Cys13–Cys32, and Cys17–Cys34.

Expressed by the venom gland.

The protein resides in the secreted. In terms of biological role, blocks voltage-gated potassium (Kv) channel and augments neurite extension via NGF/TrkA signaling pathway. The sequence is that of Toxin BmK NSPK from Olivierus martensii (Manchurian scorpion).